The chain runs to 239 residues: tRNA (guanine-N(7)-)-methyltransferase (239 aa).

Glu69, Glu94, Asp121, and Asp144 together coordinate S-adenosyl-L-methionine. The active site involves Asp144. Lys148 is a substrate binding site. An interaction with RNA region spans residues 150 to 155 (RHNKRR). Substrate is bound by residues Asp180 and 217–220 (TKFE).

It belongs to the class I-like SAM-binding methyltransferase superfamily. TrmB family. In terms of assembly, monomer.

The enzyme catalyses guanosine(46) in tRNA + S-adenosyl-L-methionine = N(7)-methylguanosine(46) in tRNA + S-adenosyl-L-homocysteine. Its pathway is tRNA modification; N(7)-methylguanine-tRNA biosynthesis. Functionally, catalyzes the formation of N(7)-methylguanine at position 46 (m7G46) in tRNA. This Salmonella typhi protein is tRNA (guanine-N(7)-)-methyltransferase.